We begin with the raw amino-acid sequence, 560 residues long: Chaperonin GroEL 2 (560 aa).

Residues 29–32, K50, 86–90, G414, and D494 contribute to the ATP site; these read TLGP and DGTTT. A disordered region spans residues 524–546; sequence EDEDDDDGGGGGGGGMPAGGAGG. Residues 532–546 show a composition bias toward gly residues; sequence GGGGGGGMPAGGAGG.

Belongs to the chaperonin (HSP60) family. As to quaternary structure, forms a cylinder of 14 subunits composed of two heptameric rings stacked back-to-back. Interacts with the co-chaperonin GroES.

The protein localises to the cytoplasm. The enzyme catalyses ATP + H2O + a folded polypeptide = ADP + phosphate + an unfolded polypeptide.. Functionally, together with its co-chaperonin GroES, plays an essential role in assisting protein folding. The GroEL-GroES system forms a nano-cage that allows encapsulation of the non-native substrate proteins and provides a physical environment optimized to promote and accelerate protein folding. This is Chaperonin GroEL 2 from Salinibacter ruber (strain DSM 13855 / M31).